A 600-amino-acid chain; its full sequence is Novobiocin biosynthesis protein H (600 aa).

The disordered stretch occupies residues 505–526 (GGKTDRAGLPDPVKATQPAGLG). A Carrier domain is found at 526-600 (GPRTPAEKVL…QLAAIATLEE (75 aa)). S561 carries the post-translational modification O-(pantetheine 4'-phosphoryl)serine.

It belongs to the ATP-dependent AMP-binding enzyme family.

It participates in antibiotic biosynthesis; novobiocin biosynthesis. Functionally, together with NovI, involved in the formation of a beta-OH-Tyr intermediate in the novobiocin biosynthesis pathway, an aminocoumarin family antibiotic that targets bacterial DNA gyrases. The ATP-dependent AMP-binding region activates L-Tyr as L-tyrosyl-AMP and then transfers the L-tyrosyl group to the acyl carrier domain through thioester formation to form a tyrosyl-S intermediate that is covalently tethered to NovH (L-Tyr-S-NovH). The protein is Novobiocin biosynthesis protein H (novH) of Streptomyces niveus (Streptomyces spheroides).